The primary structure comprises 222 residues: Transmembrane reductase CYB561D2 (222 aa).

Topologically, residues 2–17 (ALSVETESHIYRALRT) are cytoplasmic. A Cytochrome b561 domain is found at 14–217 (ALRTASGAAA…NQVSNAYLYR (204 aa)). The helical transmembrane segment at 18–38 (ASGAAAHLVALGFTIFVAVLA) threads the bilayer. Topologically, residues 39-46 (RPGSSLFS) are lumenal. A helical membrane pass occupies residues 47 to 67 (WHPVLMSLAFSFLMTEALLMF). His48 is a heme b binding site. The Cytoplasmic portion of the chain corresponds to 68–85 (SPESSLLRSLSRKVRARC). 2 residues coordinate heme b: His86 and His120. Residues 86–106 (HWVLQLLALLCALLGLGLVIL) traverse the membrane as a helical segment. The Lumenal segment spans residues 107-122 (HKEQLGKAHLTTRHGQ). Residues 123 to 143 (AGLLAVLWAGLQCSGGMGLLY) traverse the membrane as a helical segment. Residues 144 to 162 (PKLLPRWPLAKLKLYHATS) are Cytoplasmic-facing. His159 contributes to the heme b binding site. A helical transmembrane segment spans residues 163–183 (GLVGYLLGSASLLLGMFSLWF). Topologically, residues 184 to 186 (TAT) are lumenal. A helical transmembrane segment spans residues 187 to 207 (VTGGAWYLAVLCPILTSLVIM). Topologically, residues 208 to 222 (NQVSNAYLYRKRIQP) are cytoplasmic.

Requires heme b as cofactor. Highly expressed in the brain, lung, liver, and kidney. Moderately expressed in the heart, placenta, skeletal muscle, and pancreas.

It localises to the endoplasmic reticulum membrane. The protein localises to the cytoplasmic vesicle membrane. The catalysed reaction is monodehydro-L-ascorbate radical(out) + L-ascorbate(in) = monodehydro-L-ascorbate radical(in) + L-ascorbate(out). The enzyme catalyses Fe(3+)(out) + L-ascorbate(in) = monodehydro-L-ascorbate radical(in) + Fe(2+)(out) + H(+). Transmembrane reductase that may use ascorbate as an electron donor in the cytoplasm and transfer electrons across endoplasmic reticulum membranes to reduce monodehydro-L-ascorbate radical and iron cations Fe(3+) in the lumen of that compartment. The polypeptide is Transmembrane reductase CYB561D2 (Mus musculus (Mouse)).